The following is a 750-amino-acid chain: Serine/threonine-protein kinase PknG (750 aa).

Positions 1 to 66 are disordered; sequence MAKASETERS…PQDRMATTSR (66 aa). Residues 17–34 show a composition bias toward polar residues; the sequence is ADAQTATSATVRPLSTQA. A Protein kinase domain is found at 151–396; it reads YEVKGCIAHG…EMSAQLTGVL (246 aa). Residues 157–165 and K181 contribute to the ATP site; that span reads IAHGGLGWI. Catalysis depends on D276, which acts as the Proton acceptor.

This sequence belongs to the protein kinase superfamily. Ser/Thr protein kinase family. Post-translationally, autophosphorylated.

It catalyses the reaction L-seryl-[protein] + ATP = O-phospho-L-seryl-[protein] + ADP + H(+). The enzyme catalyses L-threonyl-[protein] + ATP = O-phospho-L-threonyl-[protein] + ADP + H(+). The polypeptide is Serine/threonine-protein kinase PknG (pknG) (Mycobacterium bovis (strain ATCC BAA-935 / AF2122/97)).